We begin with the raw amino-acid sequence, 825 residues long: IQ and AAA domain-containing protein 1-like (825 aa).

One can recognise an IQ domain in the interval 206–235 (RDQGAIVIQKVWKGYLQRKRIEQDRRVEME). The segment covering 344-366 (QAQESRKKDQEKKEKNKEKEKEK) has biased composition (basic and acidic residues). 2 disordered regions span residues 344 to 378 (QAQE…KEEK) and 459 to 487 (DREE…KDLT). Over residues 467–482 (KSPKKKGGKKSGKKKK) the composition is skewed to basic residues. 572-579 (GPSGMGKK) is a binding site for ATP.

This sequence belongs to the AAA ATPase family.

The chain is IQ and AAA domain-containing protein 1-like (Iqca1l) from Mus musculus (Mouse).